Consider the following 92-residue polypeptide: PqqA binding protein (92 aa).

This sequence belongs to the PqqD family. In terms of assembly, monomer. Interacts with PqqE.

It participates in cofactor biosynthesis; pyrroloquinoline quinone biosynthesis. Functionally, functions as a PqqA binding protein and presents PqqA to PqqE, in the pyrroloquinoline quinone (PQQ) biosynthetic pathway. The sequence is that of PqqA binding protein from Pseudomonas paraeruginosa (strain DSM 24068 / PA7) (Pseudomonas aeruginosa (strain PA7)).